The sequence spans 148 residues: Nucleoside diphosphate kinase (148 aa).

The ATP site is built by Lys-10, Phe-58, Arg-86, Thr-92, Arg-103, and Asn-113. The Pros-phosphohistidine intermediate role is filled by His-116.

This sequence belongs to the NDK family. It depends on Mg(2+) as a cofactor.

It is found in the cytoplasm. It catalyses the reaction a 2'-deoxyribonucleoside 5'-diphosphate + ATP = a 2'-deoxyribonucleoside 5'-triphosphate + ADP. It carries out the reaction a ribonucleoside 5'-diphosphate + ATP = a ribonucleoside 5'-triphosphate + ADP. Its function is as follows. Major role in the synthesis of nucleoside triphosphates other than ATP. The ATP gamma phosphate is transferred to the NDP beta phosphate via a ping-pong mechanism, using a phosphorylated active-site intermediate. The sequence is that of Nucleoside diphosphate kinase from Thermoplasma acidophilum (strain ATCC 25905 / DSM 1728 / JCM 9062 / NBRC 15155 / AMRC-C165).